The following is a 334-amino-acid chain: GTPase Obg (334 aa).

The 159-residue stretch at Met-1–Leu-159 folds into the Obg domain. One can recognise an OBG-type G domain in the interval Ala-160–Gln-331. GTP is bound by residues Gly-166–Ser-173, Phe-191–Tyr-195, Asp-212–Gly-215, Asn-282–Asp-285, and Ser-312–Ala-314. Ser-173 and Thr-193 together coordinate Mg(2+).

The protein belongs to the TRAFAC class OBG-HflX-like GTPase superfamily. OBG GTPase family. Monomer. The cofactor is Mg(2+).

It localises to the cytoplasm. In terms of biological role, an essential GTPase which binds GTP, GDP and possibly (p)ppGpp with moderate affinity, with high nucleotide exchange rates and a fairly low GTP hydrolysis rate. Plays a role in control of the cell cycle, stress response, ribosome biogenesis and in those bacteria that undergo differentiation, in morphogenesis control. This chain is GTPase Obg, found in Francisella tularensis subsp. tularensis (strain FSC 198).